We begin with the raw amino-acid sequence, 96 residues long: Co-chaperonin GroES (96 aa).

It belongs to the GroES chaperonin family. Heptamer of 7 subunits arranged in a ring. Interacts with the chaperonin GroEL.

It is found in the cytoplasm. In terms of biological role, together with the chaperonin GroEL, plays an essential role in assisting protein folding. The GroEL-GroES system forms a nano-cage that allows encapsulation of the non-native substrate proteins and provides a physical environment optimized to promote and accelerate protein folding. GroES binds to the apical surface of the GroEL ring, thereby capping the opening of the GroEL channel. The chain is Co-chaperonin GroES from Methylobacillus flagellatus (strain ATCC 51484 / DSM 6875 / VKM B-1610 / KT).